Here is a 120-residue protein sequence, read N- to C-terminus: Large ribosomal subunit protein bL17 (120 aa).

This sequence belongs to the bacterial ribosomal protein bL17 family. As to quaternary structure, part of the 50S ribosomal subunit. Contacts protein L32.

The chain is Large ribosomal subunit protein bL17 from Mesomycoplasma hyopneumoniae (strain J / ATCC 25934 / NCTC 10110) (Mycoplasma hyopneumoniae).